Reading from the N-terminus, the 238-residue chain is Adenylate dimethylallyltransferase (238 aa).

This sequence belongs to the isopentenyl transferase family.

It catalyses the reaction dimethylallyl diphosphate + AMP = N(6)-(dimethylallyl)adenosine 5'-phosphate + diphosphate. Transfers dimethylallyl groups to AMP as part of the biosynthesis of cytokinin phytohormones. The sequence is that of Adenylate dimethylallyltransferase (tzs) from Ralstonia solanacearum (Pseudomonas solanacearum).